The chain runs to 144 residues: Probable 4-amino-4-deoxy-L-arabinose-phosphoundecaprenol flippase subunit ArnF (144 aa).

Topologically, residues 1 to 6 (MTHRRA) are cytoplasmic. A helical membrane pass occupies residues 7-24 (TLCAMASVALVSAAQLGM). Residues 25–56 (RWSMSRLPSPVQWLEMQEHAQLDLSALRVVCA) are Periplasmic-facing. A helical membrane pass occupies residues 57 to 77 (SITAYALSMLFWLLALRVLPL). The Cytoplasmic segment spans residues 78-80 (SRA). A helical membrane pass occupies residues 81 to 101 (YSLLSISYALVYTLAATLPFF). Residues 102-104 (HET) are Periplasmic-facing. The chain crosses the membrane as a helical span at residues 105-125 (FTVSKTVGVSLIVAGVLTINL). At 126 to 144 (RRLPRPSPQDLSHENQRFR) the chain is on the cytoplasmic side.

It belongs to the ArnF family. In terms of assembly, heterodimer of ArnE and ArnF.

The protein resides in the cell inner membrane. It functions in the pathway bacterial outer membrane biogenesis; lipopolysaccharide biosynthesis. Functionally, translocates 4-amino-4-deoxy-L-arabinose-phosphoundecaprenol (alpha-L-Ara4N-phosphoundecaprenol) from the cytoplasmic to the periplasmic side of the inner membrane. In Pseudomonas syringae pv. syringae (strain B728a), this protein is Probable 4-amino-4-deoxy-L-arabinose-phosphoundecaprenol flippase subunit ArnF.